The sequence spans 753 residues: 5-methyltetrahydropteroyltriglutamate--homocysteine methyltransferase (753 aa).

Residues R17–K20 and K117 contribute to the 5-methyltetrahydropteroyltri-L-glutamate site. Residues I431–S433 and E484 each bind L-homocysteine. Residues I431 to S433 and E484 contribute to the L-methionine site. 5-methyltetrahydropteroyltri-L-glutamate-binding positions include R515–C516 and W561. D599 contributes to the L-homocysteine binding site. Residue D599 coordinates L-methionine. Position 605 (E605) interacts with 5-methyltetrahydropteroyltri-L-glutamate. Residues H641, C643, and E665 each contribute to the Zn(2+) site. H694 functions as the Proton donor in the catalytic mechanism. C726 provides a ligand contact to Zn(2+).

The protein belongs to the vitamin-B12 independent methionine synthase family. It depends on Zn(2+) as a cofactor.

The catalysed reaction is 5-methyltetrahydropteroyltri-L-glutamate + L-homocysteine = tetrahydropteroyltri-L-glutamate + L-methionine. The protein operates within amino-acid biosynthesis; L-methionine biosynthesis via de novo pathway; L-methionine from L-homocysteine (MetE route): step 1/1. Catalyzes the transfer of a methyl group from 5-methyltetrahydrofolate to homocysteine resulting in methionine formation. The sequence is that of 5-methyltetrahydropteroyltriglutamate--homocysteine methyltransferase from Escherichia coli O9:H4 (strain HS).